The sequence spans 96 residues: Neurotoxin beta-KTx 31.1 (96 aa).

The N-terminal stretch at M1–C21 is a signal peptide. Positions G22 to Q29 are excised as a propeptide. Residues Q56–Y93 form the BetaSPN-type CS-alpha/beta domain. Intrachain disulfides connect C59–C80, C66–C85, and C70–C87.

The protein belongs to the long chain scorpion toxin family. Class 1 subfamily. As to expression, expressed by the venom gland.

The protein resides in the secreted. Its function is as follows. Inhibits voltage-gated potassium channel. The protein is Neurotoxin beta-KTx 31.1 of Lychas mucronatus (Chinese swimming scorpion).